Reading from the N-terminus, the 437-residue chain is GTPase Obg (437 aa).

Residues 2 to 160 (SMFLDTAKIS…RQLELELKIL (159 aa)) enclose the Obg domain. In terms of domain architecture, OBG-type G spans 161 to 338 (ADVGLVGFPS…LLEATAELLA (178 aa)). GTP is bound by residues 167–174 (GFPSVGKS), 192–196 (FTTIV), 214–217 (DLPG), 284–287 (NKMD), and 319–321 (SSL). 2 residues coordinate Mg(2+): Ser-174 and Thr-194. One can recognise an OCT domain in the interval 359–437 (GFAETEKDFE…IGKFEFEFVD (79 aa)).

It belongs to the TRAFAC class OBG-HflX-like GTPase superfamily. OBG GTPase family. Monomer. Requires Mg(2+) as cofactor.

It is found in the cytoplasm. An essential GTPase which binds GTP, GDP and possibly (p)ppGpp with moderate affinity, with high nucleotide exchange rates and a fairly low GTP hydrolysis rate. Plays a role in control of the cell cycle, stress response, ribosome biogenesis and in those bacteria that undergo differentiation, in morphogenesis control. The sequence is that of GTPase Obg from Streptococcus pyogenes serotype M1.